The following is a 148-amino-acid chain: MANFIKPYNDDPFVGHLATPITSSSLTRALLKNLPAYRFGLTPLLRGLEIGLAHGYFLIGPFAQLGPLRNSDIGLLAGFLSTIGLILILTLGLTIYGAAAFGQEKSNGSELQTKKSWDQFKGGFFVGACGSAGFAFICLSSIPTFALN.

3 helical membrane-spanning segments follow: residues 48–68, 73–93, and 122–142; these read LEIG…LGPL, IGLL…TLGL, and GGFF…LSSI.

This sequence belongs to the PsaL family.

The protein resides in the plastid. It is found in the chloroplast thylakoid membrane. This chain is Photosystem I reaction center subunit XI, found in Thalassiosira pseudonana (Marine diatom).